Here is a 137-residue protein sequence, read N- to C-terminus: Small integral membrane protein 9 (137 aa).

Residues 1–23 (MKPLKLFCIGLLLCPLVCLLLET) form the signal peptide. At 24–84 (APPPSALLTL…NHLSDFFKSS (61 aa)) the chain is on the extracellular side. Residues 85-105 (IPPAAIFALFVTTAIMRAAIV) form a helical membrane-spanning segment. Over 106–137 (NKRLEEPHRQWTIDQRSSLEMQNMNLIKLFGG) the chain is Cytoplasmic.

Its subcellular location is the cell membrane. The chain is Small integral membrane protein 9 (Smim9) from Mus musculus (Mouse).